Here is a 293-residue protein sequence, read N- to C-terminus: tRNA pseudouridine synthase B (293 aa).

The active-site Nucleophile is D38.

Belongs to the pseudouridine synthase TruB family. Type 1 subfamily.

It carries out the reaction uridine(55) in tRNA = pseudouridine(55) in tRNA. Responsible for synthesis of pseudouridine from uracil-55 in the psi GC loop of transfer RNAs. The sequence is that of tRNA pseudouridine synthase B from Solibacter usitatus (strain Ellin6076).